The following is a 1238-amino-acid chain: MPAPHRLYPRSLICLAQALLAWALLAWAPAQASQELTLVGKAAVPDVEVALDGDDWRWLARKRVLTLGVYAPDIPPFDVTYGERYEGLTADYMAIIAHNLGMQAKVLRYPTREQALSALESGQIDLIGTVNGTDGRQQSLRLSVPYAADHPVIVMPIGARHVPASNLAGQRLAVDINYLPKETLARAYPQATLHYFPSSEQALAAVAYGQADVFIGDALTTSHLVSQSYFNDVRVVAPAHIATGGESFGVRADNTRLLRVVNAVLEAIPPSEHRSLIYRWGLGSSISLDFAHPAYSAREQQWMADHPVVKVAVLNLFAPFTLFRTDEQFGGISAAVLQLLQLRTGLDFEIIGVDTVEELIAKLRSGEADMAGALFVNSARESFLSFSRPYVRNGMVIVTRQDPDAPVDADHLDGRTVALVRNSAAIPLLQRRYPQAKVVTADNPSEAMLMVANGQADAVVQTQISASYYVNRYFAGKLRIASALDLPPAEIALATTRGQTELMSILNKALYSISNDELASIISRWRGSDGDPRTWYAYRNEIYLLIGLGLLSALLFLSWIVYLRRQIRQRKRAERALNDQLEFMRVLIDGTPNPIYVRDKEGRMLLCNDAYLDTFGVTADAVLGKTIPEANVVGDPALAREMHEFLLTRVAAEREPRFEDRDVTLHGRTRHVYQWTIPYGDSLGELKGIIGGWIDITERAELLRKLHDAKESADAANRAKTTFLATMSHEIRTPMNAIIGMLELALLRPTDQEPDRQSIQVAYDSARSLLELIGDILDIAKIEAGKFDLAPVRTALRVLPEGAIRVFDGLARQKGIELVLKTDIVGVDDVLIDPLRMKQVLSNLVGNAIKFTTEGQVVLAVTARPDGDAAHVQFSVSDTGCGISEADQRQLFKPFSQVGGSAEAGPAPGTGLGLSISRRLVELMGGTLVMRSAPGVGTTVSVDLRLTMVEKSVQAAPPAAATAATPSKPQVSLRVLVVDDHKPNLMLLRQQLDYLGQRVIAADSGEAALALWREHAFDVVITDCNMPGISGYELARRIRAAEAAPGYGRTRCILFGFTASAQMDEAQRCRAAGMDDCLFKPIGVDALRQRLNEAVARAALPTPPSPQAAAPATDDATPTAFSAESILALTQNDEALIRQLLEEVIRTNRADVDQLQKLHQQADWPKVSDMAHRLAGGARVVDAKAMIDTVLALEKKAQGQAGPSPEIDGLVRTLAAQSAALETQLRAWLEQRPHQDQP.

The N-terminal stretch at 1–32 is a signal peptide; it reads MPAPHRLYPRSLICLAQALLAWALLAWAPAQA. The Cytoplasmic segment spans residues 33-307; the sequence is SQELTLVGKA…REQQWMADHP (275 aa). Residues 308–331 form a helical membrane-spanning segment; it reads VVKVAVLNLFAPFTLFRTDEQFGG. The Periplasmic segment spans residues 332-541; that stretch reads ISAAVLQLLQ…PRTWYAYRNE (210 aa). Residues 542–563 form a helical membrane-spanning segment; the sequence is IYLLIGLGLLSALLFLSWIVYL. At 564–1238 the chain is on the cytoplasmic side; it reads RRQIRQRKRA…LEQRPHQDQP (675 aa). Positions 580 to 651 constitute a PAS domain; that stretch reads QLEFMRVLID…MHEFLLTRVA (72 aa). In terms of domain architecture, PAC spans 652–708; the sequence is AEREPRFEDRDVTLHGRTRHVYQWTIPYGDSLGELKGIIGGWIDITERAELLRKLHD. Positions 726-948 constitute a Histidine kinase domain; sequence TMSHEIRTPM…TVSVDLRLTM (223 aa). The residue at position 729 (His-729) is a Phosphohistidine; by autocatalysis. The Response regulatory domain occupies 974-1095; it reads RVLVVDDHKP…ALRQRLNEAV (122 aa). Position 1023 is a 4-aspartylphosphate (Asp-1023). Residues 1133–1228 enclose the HPt domain; that stretch reads DEALIRQLLE…AALETQLRAW (96 aa). His-1172 is modified (phosphohistidine).

Activation requires a sequential transfer of a phosphate group from a His in the primary transmitter domain, to an Asp in the receiver domain and to a His in the secondary transmitter domain.

The protein resides in the cell inner membrane. It catalyses the reaction ATP + protein L-histidine = ADP + protein N-phospho-L-histidine.. Member of the two-component regulatory system BvgS/BvgA. Phosphorylates BvgA via a four-step phosphorelay in response to environmental signals. The sequence is that of Virulence sensor protein BvgS (bvgS) from Bordetella pertussis (strain Tohama I / ATCC BAA-589 / NCTC 13251).